Here is a 644-residue protein sequence, read N- to C-terminus: Phosphomethylpyrimidine synthase (644 aa).

Substrate is bound by residues Asn236, Met265, Tyr294, His330, 350-352 (SRG), 391-394 (DGLR), and Glu430. Residue His434 coordinates Zn(2+). Tyr457 contributes to the substrate binding site. His498 serves as a coordination point for Zn(2+). [4Fe-4S] cluster contacts are provided by Cys578, Cys581, and Cys586.

The protein belongs to the ThiC family. As to quaternary structure, homodimer. The cofactor is [4Fe-4S] cluster.

The enzyme catalyses 5-amino-1-(5-phospho-beta-D-ribosyl)imidazole + S-adenosyl-L-methionine = 4-amino-2-methyl-5-(phosphooxymethyl)pyrimidine + CO + 5'-deoxyadenosine + formate + L-methionine + 3 H(+). Its pathway is cofactor biosynthesis; thiamine diphosphate biosynthesis. Catalyzes the synthesis of the hydroxymethylpyrimidine phosphate (HMP-P) moiety of thiamine from aminoimidazole ribotide (AIR) in a radical S-adenosyl-L-methionine (SAM)-dependent reaction. In Aliivibrio fischeri (strain ATCC 700601 / ES114) (Vibrio fischeri), this protein is Phosphomethylpyrimidine synthase.